The following is an 846-amino-acid chain: DNA mismatch repair protein MutS (846 aa).

Position 610–617 (610–617 (GPNMGGKS)) interacts with ATP.

The protein belongs to the DNA mismatch repair MutS family.

Functionally, this protein is involved in the repair of mismatches in DNA. It is possible that it carries out the mismatch recognition step. This protein has a weak ATPase activity. This is DNA mismatch repair protein MutS from Legionella pneumophila (strain Corby).